The chain runs to 325 residues: L-lactate dehydrogenase (325 aa).

NAD(+)-binding positions include valine 21, aspartate 42, lysine 47, tyrosine 73, and 87-88 (GA). Substrate contacts are provided by residues glutamine 90, arginine 96, and 128-131 (NPVD). NAD(+) contacts are provided by residues 126 to 128 (ATN) and serine 151. 156–159 (DTAR) contacts substrate. Residues arginine 161 and histidine 176 each contribute to the beta-D-fructose 1,6-bisphosphate site. Residue histidine 183 is the Proton acceptor of the active site. Residue tyrosine 228 is modified to Phosphotyrosine. A substrate-binding site is contributed by threonine 237.

It belongs to the LDH/MDH superfamily. LDH family. Homotetramer.

The protein resides in the cytoplasm. The enzyme catalyses (S)-lactate + NAD(+) = pyruvate + NADH + H(+). It participates in fermentation; pyruvate fermentation to lactate; (S)-lactate from pyruvate: step 1/1. Its activity is regulated as follows. Allosterically activated by fructose 1,6-bisphosphate (FBP). Functionally, catalyzes the conversion of lactate to pyruvate. The protein is L-lactate dehydrogenase of Shouchella clausii (strain KSM-K16) (Alkalihalobacillus clausii).